Reading from the N-terminus, the 621-residue chain is Rab11 family-interacting protein 4A (621 aa).

EF-hand domains follow at residues 14 to 49 and 47 to 82; these read AFLK…FGQG and GQGD…IKGC. Residues aspartate 27, aspartate 29, aspartate 31, tyrosine 33, histidine 38, aspartate 60, asparagine 62, arginine 66, and aspartate 71 each contribute to the Ca(2+) site. Disordered regions lie at residues 132-172 and 203-243; these read YSDE…KEEG and DYGE…GQTP. The span at 151-161 shows a compositional bias: low complexity; that stretch reads AADSGAGSESS. A compositionally biased stretch (basic and acidic residues) spans 162–172; that stretch reads EGGRQDDKEEG. Over residues 225–243 the composition is skewed to polar residues; sequence TNGFSDLGSSLPSSAGQTP. Residues 348–556 are a coiled coil; it reads DLKSKLKQEN…LNGQILSLSL (209 aa). Residues 558–620 form the FIP-RBD domain; it reads EAKNLFACHT…DHNPSILEIK (63 aa).

In terms of assembly, homodimer. Forms a complex with Rab11 (rab11a or rab11b) and arf6. As to expression, isoform 1 is predominantly expressed in neural tissues. Isoform B is expressed ubiquitously. In the developing retina, it is expressed in progenitors throughout the retina at early stages and becomes restricted to the ganglion cell layer and ciliary marginal zone as differentiation proceeds.

It is found in the recycling endosome membrane. Its subcellular location is the cleavage furrow. The protein resides in the midbody. The protein localises to the cytoplasmic vesicle. Functionally, acts as a regulator of endocytic traffic by participating in membrane delivery. Required for the abscission step in cytokinesis, possibly by acting as an 'address tag' delivering recycling endosome membranes to the cleavage furrow during late cytokinesis. May play a role in differentiation during retinal development. This Danio rerio (Zebrafish) protein is Rab11 family-interacting protein 4A (rab11fip4a).